A 674-amino-acid chain; its full sequence is Alpha-L-arabinofuranosidase 2 (674 aa).

Positions M1 to S24 are cleaved as a signal peptide. N-linked (GlcNAc...) asparagine glycans are attached at residues N48, N180, N199, N210, N361, N522, and N548.

It belongs to the glycosyl hydrolase 51 family. In terms of tissue distribution, high expression in flowers, siliques and stems. Observed in the vasculature of older root tissue, at the tip of anthers and in the petal blade of fully developed flowers, in floral abscission zones and in silique replum tissue. Expressed in the cambium and phloem, but not in the xylem or in the vascular system of floral tissues.

It localises to the secreted. It is found in the extracellular space. The protein resides in the extracellular matrix. The catalysed reaction is Hydrolysis of terminal non-reducing alpha-L-arabinofuranoside residues in alpha-L-arabinosides.. May be involved in the coordinated dissolution of the cell wall matrix during abscission and in the secondary cell wall formation in xylem vessels. This is Alpha-L-arabinofuranosidase 2 (ASD2) from Arabidopsis thaliana (Mouse-ear cress).